Reading from the N-terminus, the 864-residue chain is DNA mismatch repair protein MutS (864 aa).

607-614 provides a ligand contact to ATP; the sequence is GPNMGGKS.

Belongs to the DNA mismatch repair MutS family.

Functionally, this protein is involved in the repair of mismatches in DNA. It is possible that it carries out the mismatch recognition step. This protein has a weak ATPase activity. The polypeptide is DNA mismatch repair protein MutS (Neisseria meningitidis serogroup C (strain 053442)).